We begin with the raw amino-acid sequence, 399 residues long: MKPKQKISVEPLLLVAILIGVLVAATHAQDQKSVKPSAAAPSAAASRPHDEIYIDDDSIEGSGGRGGIHEDLEKDPDYSGSGFGPDDEDAEPDQHSHSSHNTRISQSSNSGINTAHTPTQTSSTIPTTSTSTPMPTTTPTATTPASTTTAAATQISSFANSSSTTTTTLAPTIPAEPQQPLFPPFDKDLDTESSGDGIDADAEDDDEDDGDDKDYDYNKELDKEIDIDGPEPGHLPPVVHHNTVETGHIPTTDEIDVDGGDEDDNGDSDIDGPRIGGNDGDITERGPGAGGSNVHELDPNTNVNSQPSDTKGIDHRPNGNEVVIMSEDDRTSSFFSQPGILAAVIGGAVVGLLCAILVVMFIVYRMRKKDEGSYALDEPKRSPANNSYAKNANNREFYA.

The N-terminal stretch at 1-28 (MKPKQKISVEPLLLVAILIGVLVAATHA) is a signal peptide. Positions 28-319 (AQDQKSVKPS…TKGIDHRPNG (292 aa)) are disordered. Topologically, residues 29–340 (QDQKSVKPSA…TSSFFSQPGI (312 aa)) are extracellular. Low complexity predominate over residues 36–46 (PSAAAPSAAAS). The O-linked (Xyl...) (glycosaminoglycan) serine glycan is linked to Ser62. Residues 67–77 (GIHEDLEKDPD) are compositionally biased toward basic and acidic residues. O-linked (Xyl...) (glycosaminoglycan) serine glycans are attached at residues Ser79, Ser81, and Ser110. Residues 99–116 (SHNTRISQSSNSGINTAH) are compositionally biased toward polar residues. The span at 117–172 (TPTQTSSTIPTTSTSTPMPTTTPTATTPASTTTAAATQISSFANSSSTTTTTLAPT) shows a compositional bias: low complexity. An N-linked (GlcNAc...) asparagine glycan is attached at Asn160. Over residues 191–214 (TESSGDGIDADAEDDDEDDGDDKD) the composition is skewed to acidic residues. The O-linked (Xyl...) (glycosaminoglycan) serine glycan is linked to Ser194. A compositionally biased stretch (basic and acidic residues) spans 215–226 (YDYNKELDKEID). Residues 253-270 (DEIDVDGGDEDDNGDSDI) show a composition bias toward acidic residues. Residues 299-309 (PNTNVNSQPSD) show a composition bias toward polar residues. The chain crosses the membrane as a helical span at residues 341–365 (LAAVIGGAVVGLLCAILVVMFIVYR). Topologically, residues 366-399 (MRKKDEGSYALDEPKRSPANNSYAKNANNREFYA) are cytoplasmic. Residues 373–399 (SYALDEPKRSPANNSYAKNANNREFYA) are disordered. Residues 383-399 (PANNSYAKNANNREFYA) show a composition bias toward polar residues.

This sequence belongs to the syndecan proteoglycan family. In terms of tissue distribution, in 13-16 hours embryos, expressed in lymph glands, peripheral and central nervous system and basal surfaces of gut epithelia. Sdc and robo are coexpressed in domains adjacent to slit; in tracheal pits and midline glia cells.

The protein localises to the membrane. Cell surface proteoglycan that bears heparan sulfate. Required for axonal and myotube guidance, is a necessary component of slit/robo signaling and is required in the slit target cells. In Drosophila melanogaster (Fruit fly), this protein is Syndecan (Sdc).